The chain runs to 64 residues: Alpha-conotoxin CnIL (64 aa).

Positions 1–21 (MGMRMMFTVFLLVVLTTTVVS) are cleaved as a signal peptide. Residues 22 to 49 (FPSDSASDGRDDEAKDERSDIYESKRDG) constitute a propeptide that is removed on maturation. Intrachain disulfides connect cysteine 51–cysteine 56 and cysteine 52–cysteine 62. Cysteine 62 is subject to Cysteine amide.

Belongs to the conotoxin A superfamily. In terms of tissue distribution, expressed by the venom duct.

Its subcellular location is the secreted. The protein is Alpha-conotoxin CnIL of Conus consors (Singed cone).